Consider the following 463-residue polypeptide: tRNA-2-methylthio-N(6)-dimethylallyladenosine synthase (463 aa).

An MTTase N-terminal domain is found at 5–125 (RKLHIKSYGC…LPQLLAKAEQ (121 aa)). [4Fe-4S] cluster contacts are provided by C14, C50, C88, C166, C170, and C173. Positions 152–384 (RARGISAFVT…QQLIDQQQSA (233 aa)) constitute a Radical SAM core domain. In terms of domain architecture, TRAM spans 387–449 (KAAIGRTVEV…RYSLLGELAS (63 aa)).

This sequence belongs to the methylthiotransferase family. MiaB subfamily. Monomer. [4Fe-4S] cluster is required as a cofactor.

Its subcellular location is the cytoplasm. The enzyme catalyses N(6)-dimethylallyladenosine(37) in tRNA + (sulfur carrier)-SH + AH2 + 2 S-adenosyl-L-methionine = 2-methylsulfanyl-N(6)-dimethylallyladenosine(37) in tRNA + (sulfur carrier)-H + 5'-deoxyadenosine + L-methionine + A + S-adenosyl-L-homocysteine + 2 H(+). Functionally, catalyzes the methylthiolation of N6-(dimethylallyl)adenosine (i(6)A), leading to the formation of 2-methylthio-N6-(dimethylallyl)adenosine (ms(2)i(6)A) at position 37 in tRNAs that read codons beginning with uridine. The chain is tRNA-2-methylthio-N(6)-dimethylallyladenosine synthase from Rhodopseudomonas palustris (strain ATCC BAA-98 / CGA009).